The sequence spans 448 residues: Probable sodium-coupled neutral amino acid transporter 6 (448 aa).

2 stretches are compositionally biased toward polar residues: residues 1 to 12 (MQASDSSINTLD) and 26 to 36 (LLANSPQRRSS). The tract at residues 1-36 (MQASDSSINTLDGHQVSAGRDESTPLLANSPQRRSS) is disordered. A run of 5 helical transmembrane segments spans residues 40 to 60 (SFGF…ILGL), 69 to 89 (ILGF…SIHL), 117 to 137 (LVAC…LFII), 164 to 184 (LLII…KIGF), and 185 to 205 (LGYT…VIVI). An intrachain disulfide couples Cys212 to Cys232. N-linked (GlcNAc...) asparagine glycosylation is found at Asn218 and Asn228. A run of 6 helical transmembrane segments spans residues 244 to 264 (AFAL…LPIY), 281 to 301 (VGIA…YLTF), 321 to 341 (VLII…VPLI), 365 to 385 (ILVT…VPDM), 388 to 408 (VFGV…PGLF), and 425 to 445 (ACGL…LIIM).

The protein belongs to the amino acid/polyamine transporter 2 family.

It localises to the cell membrane. Probable sodium-dependent amino acid/proton antiporter, could be a neuronal transporter for glutamate. The polypeptide is Probable sodium-coupled neutral amino acid transporter 6 (slc38a6) (Xenopus tropicalis (Western clawed frog)).